A 402-amino-acid chain; its full sequence is uncharacterized protein (402 aa).

A run of 11 helical transmembrane segments spans residues 12 to 32 (FWLI…ITSV), 48 to 68 (GAAG…SPLA), 80 to 100 (TLWL…TGYT), 101 to 121 (AALF…NVLL), 134 to 154 (GIMI…ASGV), 168 to 188 (QAFL…IPQL), 212 to 232 (WYVT…IAWF), 248 to 268 (WMVS…PVLA), 291 to 311 (GLLA…IGIG), 339 to 359 (MSQS…GYLF), and 367 to 387 (MPIV…QGAG).

This sequence belongs to the major facilitator superfamily. Cyanate porter (TC 2.A.1.17) family.

Its subcellular location is the cell membrane. This is an uncharacterized protein from Bacillus subtilis (strain 168).